Here is an 864-residue protein sequence, read N- to C-terminus: Leucine--tRNA ligase (864 aa).

A 'HIGH' region motif is present at residues P42 to H52. Positions K624–S628 match the 'KMSKS' region motif. An ATP-binding site is contributed by K627.

Belongs to the class-I aminoacyl-tRNA synthetase family.

It localises to the cytoplasm. The enzyme catalyses tRNA(Leu) + L-leucine + ATP = L-leucyl-tRNA(Leu) + AMP + diphosphate. In Burkholderia mallei (strain NCTC 10229), this protein is Leucine--tRNA ligase.